A 139-amino-acid polypeptide reads, in one-letter code: Probable trafficking protein particle complex subunit 2 (139 aa).

This sequence belongs to the TRAPP small subunits family. Sedlin subfamily. As to quaternary structure, part of the multisubunit TRAPP (transport protein particle) complex.

It is found in the cytoplasm. The protein resides in the perinuclear region. It localises to the endoplasmic reticulum. Its subcellular location is the golgi apparatus. Functionally, may play a role in vesicular transport from endoplasmic reticulum to Golgi. Involved in dsRNA uptake. The chain is Probable trafficking protein particle complex subunit 2 from Drosophila melanogaster (Fruit fly).